The primary structure comprises 496 residues: Lysine--tRNA ligase (496 aa).

2 residues coordinate Mg(2+): Glu409 and Glu416.

It belongs to the class-II aminoacyl-tRNA synthetase family. In terms of assembly, homodimer. It depends on Mg(2+) as a cofactor.

It is found in the cytoplasm. The catalysed reaction is tRNA(Lys) + L-lysine + ATP = L-lysyl-tRNA(Lys) + AMP + diphosphate. The polypeptide is Lysine--tRNA ligase (Streptococcus agalactiae serotype III (strain NEM316)).